Reading from the N-terminus, the 240-residue chain is Small ribosomal subunit protein uS3 (240 aa).

The 71-residue stretch at 39-109 (IRQYIEKTLN…QIRVNVIEVP (71 aa)) folds into the KH type-2 domain. Residues 219 to 240 (APPSQPRRKSRRQQFDDRSQDG) form a disordered region. Residues 231-240 (QQFDDRSQDG) show a composition bias toward basic and acidic residues.

It belongs to the universal ribosomal protein uS3 family. As to quaternary structure, part of the 30S ribosomal subunit. Forms a tight complex with proteins S10 and S14.

Binds the lower part of the 30S subunit head. Binds mRNA in the 70S ribosome, positioning it for translation. This Synechocystis sp. (strain ATCC 27184 / PCC 6803 / Kazusa) protein is Small ribosomal subunit protein uS3.